The primary structure comprises 255 residues: Hydroxyacylglutathione hydrolase (255 aa).

Residues His56, His58, Asp60, His61, His114, Asp133, and His171 each coordinate Zn(2+).

It belongs to the metallo-beta-lactamase superfamily. Glyoxalase II family. Monomer. Zn(2+) serves as cofactor.

It catalyses the reaction an S-(2-hydroxyacyl)glutathione + H2O = a 2-hydroxy carboxylate + glutathione + H(+). It functions in the pathway secondary metabolite metabolism; methylglyoxal degradation; (R)-lactate from methylglyoxal: step 2/2. Functionally, thiolesterase that catalyzes the hydrolysis of S-D-lactoyl-glutathione to form glutathione and D-lactic acid. The protein is Hydroxyacylglutathione hydrolase of Rhodopseudomonas palustris (strain BisB18).